A 266-amino-acid polypeptide reads, in one-letter code: L-cystine-binding protein TcyJ (266 aa).

The first 29 residues, 1–29 (MKLAHLGRQALMGVMAVALVAGMSVKSFA), serve as a signal peptide directing secretion.

This sequence belongs to the bacterial solute-binding protein 3 family. As to quaternary structure, the complex is composed of two ATP-binding proteins (TcyN), two transmembrane proteins (TcyL) and a solute-binding protein (TcyJ).

It is found in the periplasm. In terms of biological role, part of the ABC transporter complex TcyJLN involved in L-cystine import. Binds cystine. The protein is L-cystine-binding protein TcyJ of Escherichia coli O6:H1 (strain CFT073 / ATCC 700928 / UPEC).